A 356-amino-acid polypeptide reads, in one-letter code: Sulfate/thiosulfate import ATP-binding protein CysA (356 aa).

One can recognise an ABC transporter domain in the interval 3–237; the sequence is IEVKNLVKRF…PKNSFVFHFL (235 aa). 35–42 lines the ATP pocket; the sequence is GPSGSGKT.

It belongs to the ABC transporter superfamily. Sulfate/tungstate importer (TC 3.A.1.6) family. The complex is composed of two ATP-binding proteins (CysA), two transmembrane proteins (CysT and CysW) and a solute-binding protein (CysP).

Its subcellular location is the cell inner membrane. The catalysed reaction is sulfate(out) + ATP + H2O = sulfate(in) + ADP + phosphate + H(+). It catalyses the reaction thiosulfate(out) + ATP + H2O = thiosulfate(in) + ADP + phosphate + H(+). In terms of biological role, part of the ABC transporter complex CysAWTP involved in sulfate/thiosulfate import. Responsible for energy coupling to the transport system. This Leptospira interrogans serogroup Icterohaemorrhagiae serovar copenhageni (strain Fiocruz L1-130) protein is Sulfate/thiosulfate import ATP-binding protein CysA.